Consider the following 809-residue polypeptide: PiggyBac transposable element-derived protein 1 (809 aa).

Residues 44-126 (RLRFRHFCYQ…TVLENLETGS (83 aa)) form the SCAN box domain. Residues 170–199 (CEPPQRPQGNPQEVSGPVPHGSAHLQEKNP) are disordered. K218 participates in a covalent cross-link: Glycyl lysine isopeptide (Lys-Gly) (interchain with G-Cter in SUMO2). A disordered region spans residues 271 to 297 (KQETSEEMEQSGEASGKPNRECAPQIP). S360 is subject to Phosphoserine.

The chain is PiggyBac transposable element-derived protein 1 (PGBD1) from Homo sapiens (Human).